The primary structure comprises 232 residues: MAKISKRRQAFAAKVDRQKLYAIDDALALVKECASAKFNESIDVAVQLGIDAKKSDQVVRGSVVLPAGTGKSVRVAVFAQGEKAEQARAAGAEVVGMEDLAEQIKAGQMDFDIVIASPDTMRIVGTLGQILGPRGLMPNPKVGTVTPDVATAVKNAKAGQVQFRVDKAGIIHATIGRASFEPAALRSNLSALIEALQKAKPATSKGVYLRKIALSSTMGVGVRVDQATLAAQ.

This sequence belongs to the universal ribosomal protein uL1 family. As to quaternary structure, part of the 50S ribosomal subunit.

Functionally, binds directly to 23S rRNA. The L1 stalk is quite mobile in the ribosome, and is involved in E site tRNA release. Protein L1 is also a translational repressor protein, it controls the translation of the L11 operon by binding to its mRNA. This chain is Large ribosomal subunit protein uL1, found in Burkholderia multivorans (strain ATCC 17616 / 249).